A 261-amino-acid chain; its full sequence is Rho-related GTP-binding protein RhoU (261 aa).

The tract at residues 1-48 is disordered; the sequence is MAPQQGRPALPARCEPPAAPPVPPRRERGGRGARGPGVSGGRGRAGGA. Low complexity predominate over residues 7–16; the sequence is RPALPARCEP. The span at 32–48 shows a compositional bias: gly residues; sequence GARGPGVSGGRGRAGGA. GTP-binding positions include 59–66, 106–110, and 164–167; these read GDGAVGKT, DTAGQ, and TQSD. Glycyl lysine isopeptide (Lys-Gly) (interchain with G-Cter in ubiquitin) cross-links involve residues K180 and K251. Residue C259 is the site of S-palmitoyl cysteine attachment.

It belongs to the small GTPase superfamily. Rho family. In terms of assembly, interacts with PAK1. Interacts with PAK3. Interacts with ARHGAP30 in a GTP-independent manner. In its GTP-loaded conformation, interacts with ARHGAP31. Interacts with PTK2B/PYK2. Interacts with PAK4; interaction protects RHOU from ubiquitination and subsequent degradation. Requires Mg(2+) as cofactor. Post-translationally, tyrosine phosphorylated by SRC in response to PTK2B/PYK2 activation. Ubiquitinated. 'Lys-48'-linked ubiquitination at Lys-180 and Lys-251 by the ECS(RAB40A) complex leading to its degradation.

The protein resides in the cell membrane. Its subcellular location is the golgi apparatus membrane. It localises to the cell junction. The protein localises to the focal adhesion. It is found in the cell projection. The protein resides in the podosome. In terms of biological role, binds to and activates protein kinase PAK1. Plays a role in the regulation of cell morphology, cytoskeletal organization and focal adhesion assembly during cell migration. Also stimulates quiescent cells to reenter the cell cycle. Has no detectable GTPase activity but its high intrinsic guanine nucleotide exchange activity suggests it is constitutively GTP-bound. The polypeptide is Rho-related GTP-binding protein RhoU (Mus musculus (Mouse)).